A 102-amino-acid chain; its full sequence is Protamine-2 (102 aa).

The disordered stretch occupies residues 1–102 (MVRYRMRSLS…RTRRRRCRRH (102 aa)). 2 positions are modified to phosphoserine: serine 8 and serine 10. The span at 8 to 17 (SLSERSHEVH) shows a compositional bias: basic and acidic residues. Low complexity predominate over residues 18 to 29 (GQQVHGQDQGHN). Positions 39–48 (EHVEVYERTH) are enriched in basic and acidic residues. Residues 49–102 (GHSHYRRRHCSRRRLHRIHRRRHRSCRRRRRRSCRHRRRHRRGCRTRRRRCRRH) show a composition bias toward basic residues.

It belongs to the protamine P2 family. In terms of assembly, interacts with TDRP. In terms of processing, proteolytic processing into mature chains is required for histone eviction during spermatogenesis. Transition proteins (TNP1 and TNP2) are required for processing. As to expression, testis.

Its subcellular location is the nucleus. The protein resides in the chromosome. Protamines substitute for histones in the chromatin of sperm during the haploid phase of spermatogenesis. They compact sperm DNA into a highly condensed, stable and inactive complex. The sequence is that of Protamine-2 (PRM2) from Macaca mulatta (Rhesus macaque).